Consider the following 308-residue polypeptide: Protein translocase subunit SecF (308 aa).

A run of 6 helical transmembrane segments spans residues 28 to 48 (SIIL…NFGI), 140 to 160 (IEAG…YIWV), 164 to 184 (WYFG…ALGF), 194 to 214 (LSTI…SVVI), 246 to 266 (ILTV…GGEA), and 272 to 292 (VLVF…SAPI).

Belongs to the SecD/SecF family. SecF subfamily. Forms a complex with SecD. Part of the essential Sec protein translocation apparatus which comprises SecA, SecYEG and auxiliary proteins SecDF-YajC and YidC.

Its subcellular location is the cell inner membrane. Functionally, part of the Sec protein translocase complex. Interacts with the SecYEG preprotein conducting channel. SecDF uses the proton motive force (PMF) to complete protein translocation after the ATP-dependent function of SecA. The polypeptide is Protein translocase subunit SecF (Rickettsia conorii (strain ATCC VR-613 / Malish 7)).